The sequence spans 123 residues: Small ribosomal subunit protein uS12 (123 aa).

A 3-methylthioaspartic acid modification is found at Asp89.

This sequence belongs to the universal ribosomal protein uS12 family. Part of the 30S ribosomal subunit. Contacts proteins S8 and S17. May interact with IF1 in the 30S initiation complex.

In terms of biological role, with S4 and S5 plays an important role in translational accuracy. Interacts with and stabilizes bases of the 16S rRNA that are involved in tRNA selection in the A site and with the mRNA backbone. Located at the interface of the 30S and 50S subunits, it traverses the body of the 30S subunit contacting proteins on the other side and probably holding the rRNA structure together. The combined cluster of proteins S8, S12 and S17 appears to hold together the shoulder and platform of the 30S subunit. The chain is Small ribosomal subunit protein uS12 from Rhizobium etli (strain ATCC 51251 / DSM 11541 / JCM 21823 / NBRC 15573 / CFN 42).